An 873-amino-acid chain; its full sequence is Alanine--tRNA ligase (873 aa).

Residues histidine 562, histidine 566, cysteine 666, and histidine 670 each coordinate Zn(2+).

It belongs to the class-II aminoacyl-tRNA synthetase family. The cofactor is Zn(2+).

It is found in the cytoplasm. The enzyme catalyses tRNA(Ala) + L-alanine + ATP = L-alanyl-tRNA(Ala) + AMP + diphosphate. In terms of biological role, catalyzes the attachment of alanine to tRNA(Ala) in a two-step reaction: alanine is first activated by ATP to form Ala-AMP and then transferred to the acceptor end of tRNA(Ala). Also edits incorrectly charged Ser-tRNA(Ala) and Gly-tRNA(Ala) via its editing domain. The protein is Alanine--tRNA ligase of Dichelobacter nodosus (strain VCS1703A).